Here is a 250-residue protein sequence, read N- to C-terminus: Gamma-secretase subunit APH1-like (250 aa).

The next 7 membrane-spanning stretches (helical) occupy residues 5–25 (AGIG…VSVI), 29–49 (PFLI…LIIL), 57–77 (LPLK…SVCF), 116–136 (IALA…CLSL), 157–177 (FLIS…SMVI), 191–211 (IIVP…FASE), and 212–232 (GCVI…VHCG).

The protein belongs to the APH-1 family. As to quaternary structure, probable component of the gamma-secretase complex, a complex composed of a presenilin homodimer, nicastrin, APH1 and PEN2.

It localises to the membrane. Probable subunit of the gamma-secretase complex, an endoprotease complex that catalyzes the intramembrane cleavage of integral proteins such as Notch receptors. The chain is Gamma-secretase subunit APH1-like from Arabidopsis thaliana (Mouse-ear cress).